The sequence spans 287 residues: Cyclopropane mycolic acid synthase 1 (287 aa).

S-adenosyl-L-methionine is bound by residues 33 to 34 (YS), 68 to 76 (LLDVGCGWG), 94 to 99 (TLSKNQ), and 123 to 124 (WE). Cys269 is a catalytic residue.

The protein belongs to the CFA/CMAS family. As to quaternary structure, homodimer.

The protein localises to the cytoplasm. The enzyme catalyses a 1-acyl-2-(9Z)-enoyl-sn-glycero-3-phospholipid + S-adenosyl-L-methionine = a 1-acyl-2-(9-cyclopronane)-acyl-sn-glycero-3-phospholipid + S-adenosyl-L-homocysteine + H(+). It participates in lipid metabolism; mycolic acid biosynthesis. In terms of biological role, catalyzes the conversion of a double bond to a cyclopropane ring at the distal position of an alpha mycolic acid via the transfer of a methylene group from S-adenosyl-L-methionine. Cyclopropanated mycolic acids are key factors participating in cell envelope permeability, host immunomodulation and persistence. This chain is Cyclopropane mycolic acid synthase 1 (cmaA1), found in Mycobacterium tuberculosis (strain ATCC 25177 / H37Ra).